A 422-amino-acid chain; its full sequence is 5-hydroxytryptamine receptor 1A (422 aa).

Residues 1–38 are Extracellular-facing; that stretch reads MDVLGPGQGNNTTSSEGPFGTRANATGISDVTFSYQVI. N-linked (GlcNAc...) asparagine glycosylation is found at asparagine 10, asparagine 11, and asparagine 24. A helical transmembrane segment spans residues 39-59; sequence TSLLLGTLIFCAVLGNACVVA. Over 60–73 the chain is Cytoplasmic; sequence AIALERSLQNVANY. A helical membrane pass occupies residues 74–98; it reads LIGSLAVTDLMVSVLVLPMAALYQV. Over 99–107 the chain is Extracellular; that stretch reads LNKWTLGQV. The chain crosses the membrane as a helical span at residues 108–132; sequence TCDLFIALDVLCCTSSILHLCAIAL. A disulfide bond links cysteine 109 and cysteine 187. Serotonin-binding residues include aspartate 116 and cysteine 120. Positions 133 to 135 match the DRY motif; important for ligand-induced conformation changes motif; sequence DRY. Topologically, residues 133–152 are cytoplasmic; sequence DRYWAITDPIDYVNKRTPRR. The helical transmembrane segment at 153 to 174 threads the bilayer; the sequence is AAALISLTWLVGFLISIPPMLG. The Extracellular segment spans residues 175–193; it reads WRTPEDRSDPDACTISKDH. A helical membrane pass occupies residues 194-216; the sequence is GYTIYSTFGAFYIPLLLMLVLYG. The Cytoplasmic segment spans residues 217–346; that stretch reads RIFRAARFRI…LARERKTVKT (130 aa). The disordered stretch occupies residues 237–262; sequence GADSRLGASPAPQRKKSANGELGSRE. The 1D-myo-inositol 4-phosphate site is built by lysine 345, threonine 346, and glycine 352. The helical transmembrane segment at 347–370 threads the bilayer; it reads LGIIMGTFILCWLPFFIVALVLPF. Topologically, residues 371-378 are extracellular; sequence CESSCHMP. Residues 379-403 traverse the membrane as a helical segment; sequence TLLGAIINWLGYSNSLLNPVIYAYF. The short motif at 396-400 is the NPxxY motif; important for ligand-induced conformation changes and signaling element; that stretch reads NPVIY. The 1D-myo-inositol 4-phosphate site is built by phenylalanine 403, asparagine 404, and lysine 405. Over 404–422 the chain is Cytoplasmic; sequence NKDFQNAFKKILKCKFCRR.

The protein belongs to the G-protein coupled receptor 1 family. 5-hydroxytryptamine receptor subfamily. HTR1A sub-subfamily. As to quaternary structure, heterodimer; heterodimerizes with GPER1. Interacts with YIF1B. Interacts with GPR39 and GALR1.

It localises to the cell membrane. The protein resides in the cell projection. The protein localises to the dendrite. G-protein coupled receptor activity is regulated by lipids: phosphatidylinositol 4-phosphate increases HTR1A-mediated activity. Functionally, G-protein coupled receptor for 5-hydroxytryptamine (serotonin). Also functions as a receptor for various drugs and psychoactive substances. Ligand binding causes a conformation change that triggers signaling via guanine nucleotide-binding proteins (G proteins) and modulates the activity of downstream effectors, such as adenylate cyclase. HTR1A is coupled to G(i)/G(o) G alpha proteins and mediates inhibitory neurotransmission: signaling inhibits adenylate cyclase activity and activates a phosphatidylinositol-calcium second messenger system that regulates the release of Ca(2+) ions from intracellular stores. Beta-arrestin family members regulate signaling by mediating both receptor desensitization and resensitization processes. This is 5-hydroxytryptamine receptor 1A (HTR1A) from Equus caballus (Horse).